We begin with the raw amino-acid sequence, 216 residues long: Ras-related protein Rab11A (216 aa).

GTP-binding positions include 19 to 27, 38 to 44, 67 to 71, 125 to 128, and 155 to 157; these read GDSGVGKSN, CLESKST, DTAGQ, NKSD, and SAL. An Effector region motif is present at residues 41–49; that stretch reads SKSTIGVEF. S-geranylgeranyl cysteine attachment occurs at residues Cys-213 and Cys-214.

This sequence belongs to the small GTPase superfamily. Rab family.

It is found in the cell membrane. The chain is Ras-related protein Rab11A (RAB11A) from Nicotiana tabacum (Common tobacco).